Consider the following 603-residue polypeptide: Matrix metalloproteinase-17 (603 aa).

The N-terminal stretch at 1 to 35 (MRRRAARGPGPPPPGPGLSRLPLPLLLLLALGTRG) is a signal peptide. A propeptide spanning residues 36–125 (GCAAPAPAPR…PVLTQARRRR (90 aa)) is cleaved from the precursor. The Cysteine switch motif lies at 108–115 (PRCSLPDL). Cys110 is a Zn(2+) binding site. Asn137 is a glycosylation site (N-linked (GlcNAc...) asparagine). His248 serves as a coordination point for Zn(2+). The active site involves Glu249. Zn(2+) is bound by residues His252 and His258. Positions 301–329 (SPTAQPEEPPLLPEPPDNRSSAPPRKDVP) are disordered. A glycan (N-linked (GlcNAc...) asparagine) is linked at Asn318. A disulfide bridge links Cys332 with Cys523. Hemopexin repeat units lie at residues 333–378 (STHF…WRGL), 382–427 (LDSV…FSLP), 428–475 (PGGI…WRGV), and 476–523 (PSTL…WLVC). The disordered stretch occupies residues 537 to 571 (DAAEGPRAPPGQHDQSRSEDGYEVCSCTSGASSPP). The GPI-anchor amidated serine moiety is linked to residue Ser565. Residues 566–603 (GASSPPGAPGPLVAATMLLLLPPLSPGALWTAAQALTL) constitute a propeptide, removed in mature form.

Belongs to the peptidase M10A family. It depends on Zn(2+) as a cofactor. Requires Ca(2+) as cofactor. The precursor is cleaved by a furin endopeptidase. Expressed in brain, leukocytes, colon, ovary testis and breast cancer. Expressed also in many transformed and non-transformed cell types.

It is found in the cell membrane. The protein resides in the secreted. The protein localises to the extracellular space. Its subcellular location is the extracellular matrix. Endopeptidase that degrades various components of the extracellular matrix, such as fibrin. May be involved in the activation of membrane-bound precursors of growth factors or inflammatory mediators, such as tumor necrosis factor-alpha. May also be involved in tumoral process. Cleaves pro-TNF-alpha at the '74-Ala-|-Gln-75' site. Not obvious if able to proteolytically activate progelatinase A. Does not hydrolyze collagen types I, II, III, IV and V, gelatin, fibronectin, laminin, decorin nor alpha1-antitrypsin. This Homo sapiens (Human) protein is Matrix metalloproteinase-17 (MMP17).